A 132-amino-acid chain; its full sequence is Fluoride-specific ion channel FluC (132 aa).

The next 4 helical transmembrane spans lie at 5–25 (LVAI…LGMW), 36–56 (GTLA…ALFA), 68–88 (FVVT…AEMF), and 103–123 (IAVH…TFGA). Residues Gly-75 and Thr-78 each coordinate Na(+).

It belongs to the fluoride channel Fluc/FEX (TC 1.A.43) family.

It is found in the cell inner membrane. The catalysed reaction is fluoride(in) = fluoride(out). With respect to regulation, na(+) is not transported, but it plays an essential structural role and its presence is essential for fluoride channel function. In terms of biological role, fluoride-specific ion channel. Important for reducing fluoride concentration in the cell, thus reducing its toxicity. This Chromohalobacter salexigens (strain ATCC BAA-138 / DSM 3043 / CIP 106854 / NCIMB 13768 / 1H11) protein is Fluoride-specific ion channel FluC.